A 269-amino-acid chain; its full sequence is 4-hydroxy-tetrahydrodipicolinate reductase (269 aa).

NAD(+) contacts are provided by residues 12–17 (GGSGRM), 102–104 (GTT), and 126–129 (SPNM). The Proton donor/acceptor role is filled by histidine 159. Residue histidine 160 participates in (S)-2,3,4,5-tetrahydrodipicolinate binding. Lysine 163 acts as the Proton donor in catalysis. Residue 169–170 (GT) coordinates (S)-2,3,4,5-tetrahydrodipicolinate.

It belongs to the DapB family.

It is found in the cytoplasm. It carries out the reaction (S)-2,3,4,5-tetrahydrodipicolinate + NAD(+) + H2O = (2S,4S)-4-hydroxy-2,3,4,5-tetrahydrodipicolinate + NADH + H(+). It catalyses the reaction (S)-2,3,4,5-tetrahydrodipicolinate + NADP(+) + H2O = (2S,4S)-4-hydroxy-2,3,4,5-tetrahydrodipicolinate + NADPH + H(+). It participates in amino-acid biosynthesis; L-lysine biosynthesis via DAP pathway; (S)-tetrahydrodipicolinate from L-aspartate: step 4/4. Functionally, catalyzes the conversion of 4-hydroxy-tetrahydrodipicolinate (HTPA) to tetrahydrodipicolinate. The chain is 4-hydroxy-tetrahydrodipicolinate reductase from Leptospira borgpetersenii serovar Hardjo-bovis (strain JB197).